The following is a 217-amino-acid chain: 3,4-dihydroxy-2-butanone 4-phosphate synthase (217 aa).

Residues 37–38, D42, 150–154, and E174 each bind D-ribulose 5-phosphate; these read RE and RQGHT. E38 is a Mg(2+) binding site. H153 is a Mg(2+) binding site.

Belongs to the DHBP synthase family. Homodimer. Requires Mg(2+) as cofactor. The cofactor is Mn(2+).

It carries out the reaction D-ribulose 5-phosphate = (2S)-2-hydroxy-3-oxobutyl phosphate + formate + H(+). It functions in the pathway cofactor biosynthesis; riboflavin biosynthesis; 2-hydroxy-3-oxobutyl phosphate from D-ribulose 5-phosphate: step 1/1. Its function is as follows. Catalyzes the conversion of D-ribulose 5-phosphate to formate and 3,4-dihydroxy-2-butanone 4-phosphate. The chain is 3,4-dihydroxy-2-butanone 4-phosphate synthase from Photorhabdus laumondii subsp. laumondii (strain DSM 15139 / CIP 105565 / TT01) (Photorhabdus luminescens subsp. laumondii).